A 92-amino-acid polypeptide reads, in one-letter code: Small ribosomal subunit protein bS20 (92 aa).

The tract at residues 1 to 28 is disordered; that stretch reads MANTASAEKRNRQAQKRRARNVQVRTGV.

The protein belongs to the bacterial ribosomal protein bS20 family.

Functionally, binds directly to 16S ribosomal RNA. The chain is Small ribosomal subunit protein bS20 from Anaeromyxobacter dehalogenans (strain 2CP-C).